We begin with the raw amino-acid sequence, 561 residues long: uncharacterized protein (561 aa).

Transmembrane regions (helical) follow at residues 27–49, 54–71, 83–105, 115–137, 142–162, and 177–199; these read ILEF…GLLI, FFGI…ALAL, LVYQ…SEFF, LTLF…IKLF, IIGA…AAMV, and VVGY…AIGA. The 82-residue stretch at 292-373 folds into the RCK C-terminal domain; sequence QQDVPIEDTD…MSEVRRFLGD (82 aa). The next 4 helical transmembrane spans lie at 383–405, 409–428, 441–463, and 478–500; these read LMPF…PLPG, LSLG…GALN, ASRT…SAGV, and IAGG…MPLF.

This sequence belongs to the AAE transporter (TC 2.A.81) family.

The protein resides in the cell membrane. This is an uncharacterized protein from Corynebacterium diphtheriae (strain ATCC 700971 / NCTC 13129 / Biotype gravis).